Reading from the N-terminus, the 227-residue chain is Cytidylate kinase (227 aa).

An ATP-binding site is contributed by 12–20 (GPSGAGKGT).

Belongs to the cytidylate kinase family. Type 1 subfamily.

Its subcellular location is the cytoplasm. The enzyme catalyses CMP + ATP = CDP + ADP. It catalyses the reaction dCMP + ATP = dCDP + ADP. The chain is Cytidylate kinase from Salmonella choleraesuis (strain SC-B67).